The sequence spans 98 residues: NADH-ubiquinone oxidoreductase chain 4L (98 aa).

Transmembrane regions (helical) follow at residues 1–21, 29–49, and 61–81; these read MSLV…GLLM, SLLC…IMVL, and IILL…LVMV.

It belongs to the complex I subunit 4L family. Core subunit of respiratory chain NADH dehydrogenase (Complex I) which is composed of 45 different subunits.

It is found in the mitochondrion inner membrane. The catalysed reaction is a ubiquinone + NADH + 5 H(+)(in) = a ubiquinol + NAD(+) + 4 H(+)(out). Functionally, core subunit of the mitochondrial membrane respiratory chain NADH dehydrogenase (Complex I) which catalyzes electron transfer from NADH through the respiratory chain, using ubiquinone as an electron acceptor. Part of the enzyme membrane arm which is embedded in the lipid bilayer and involved in proton translocation. The sequence is that of NADH-ubiquinone oxidoreductase chain 4L (MT-ND4L) from Pseudosoriculus fumidus (Taiwanese brown-toothed shrew).